The sequence spans 502 residues: Cytochrome P450 83A1 (502 aa).

A helical transmembrane segment spans residues 1–21; it reads MEDIIIGVVALAAVLLFFLYQ. Cysteine 442 contacts heme.

Belongs to the cytochrome P450 family. It depends on heme as a cofactor.

It is found in the endoplasmic reticulum membrane. It carries out the reaction an (E)-omega-(methylsulfanyl)-alkanal oxime + glutathione + reduced [NADPH--hemoprotein reductase] + O2 = an S-[(1E)-1-(hydroxyimino)-omega-(methylsulfanyl)alkyl]-L-glutathione + oxidized [NADPH--hemoprotein reductase] + 2 H2O + H(+). Involved in the metabolism of aliphatic and aromatic oximes. Involved in the biosynthesis of both short-chain and long-chain aliphatic glucosinolates. The protein is Cytochrome P450 83A1 (CYP83A1) of Arabidopsis thaliana (Mouse-ear cress).